A 464-amino-acid chain; its full sequence is Protein FAM90A18 (464 aa).

Disordered regions lie at residues 1–42 (MMAR…DPRL), 70–387 (PATL…ASHD), and 415–437 (HSPEKPGAFLAQSPHVSEKSEAP). 2 stretches are compositionally biased toward basic and acidic residues: residues 74–89 (GKKEGKENLKPWKPRV) and 97–114 (NKDKGEKEERPRQQDPQR). The span at 180 to 197 (LASLSPLRKASLSSSSSL) shows a compositional bias: low complexity.

Belongs to the FAM90 family.

The chain is Protein FAM90A18 from Homo sapiens (Human).